The primary structure comprises 367 residues: tRNA-specific 2-thiouridylase MnmA (367 aa).

Residues 10-17 and methionine 36 contribute to the ATP site; that span reads AMSGGVDS. Residue cysteine 106 is the Nucleophile of the active site. An intrachain disulfide couples cysteine 106 to cysteine 204. Glycine 130 contacts ATP. Residues 154–156 are interaction with tRNA; the sequence is KDQ. The Cysteine persulfide intermediate role is filled by cysteine 204. The interaction with tRNA stretch occupies residues 310 to 311; that stretch reads RY.

The protein belongs to the MnmA/TRMU family.

Its subcellular location is the cytoplasm. It carries out the reaction S-sulfanyl-L-cysteinyl-[protein] + uridine(34) in tRNA + AH2 + ATP = 2-thiouridine(34) in tRNA + L-cysteinyl-[protein] + A + AMP + diphosphate + H(+). Catalyzes the 2-thiolation of uridine at the wobble position (U34) of tRNA, leading to the formation of s(2)U34. The polypeptide is tRNA-specific 2-thiouridylase MnmA (Desulforamulus reducens (strain ATCC BAA-1160 / DSM 100696 / MI-1) (Desulfotomaculum reducens)).